Reading from the N-terminus, the 165-residue chain is Sporulation thiol-disulfide oxidoreductase A (165 aa).

The signal sequence occupies residues 1 to 26 (MLTKRLLTIYIMLLGLIAWFPGAAQA). Positions 27–165 (EEKQPAVPAV…AEQLKEWTEE (139 aa)) constitute a Thioredoxin domain. Cys-65 and Cys-68 are joined by a disulfide.

Belongs to the thioredoxin family.

The protein resides in the spore outer membrane. Functionally, thiol-disulfide oxidoreductase with a reductive function, involved in spore cortex synthesis. It could be involved either in breaking disulfide bonds in cortex components or in proteins that are important for cortex synthesis, or in thiol/disulfide bond interchange. This is Sporulation thiol-disulfide oxidoreductase A (stoA) from Bacillus subtilis (strain 168).